A 311-amino-acid chain; its full sequence is Probable manganese-dependent inorganic pyrophosphatase (311 aa).

6 residues coordinate Mn(2+): H9, D13, D15, D75, H97, and D149.

The protein belongs to the PPase class C family. The cofactor is Mn(2+).

The protein localises to the cytoplasm. It carries out the reaction diphosphate + H2O = 2 phosphate + H(+). The chain is Probable manganese-dependent inorganic pyrophosphatase from Lactobacillus johnsonii (strain CNCM I-12250 / La1 / NCC 533).